Consider the following 206-residue polypeptide: High frequency lysogenization protein HflD homolog (206 aa).

It belongs to the HflD family.

Its subcellular location is the cytoplasm. It localises to the cell inner membrane. In Marinobacter nauticus (strain ATCC 700491 / DSM 11845 / VT8) (Marinobacter aquaeolei), this protein is High frequency lysogenization protein HflD homolog.